The sequence spans 392 residues: GTPase Obg (392 aa).

In terms of domain architecture, Obg spans methionine 1–leucine 159. The segment at asparagine 127–aspartate 148 is disordered. A compositionally biased stretch (polar residues) spans arginine 129–methionine 143. Positions alanine 160 to isoleucine 333 constitute an OBG-type G domain. GTP contacts are provided by residues glycine 166 to serine 173, phenylalanine 191 to valine 195, aspartate 213 to glycine 216, asparagine 283 to aspartate 286, and serine 314 to alanine 316. Mg(2+) contacts are provided by serine 173 and threonine 193. Positions glutamate 362–valine 386 are enriched in acidic residues. The disordered stretch occupies residues glutamate 362–arginine 392.

It belongs to the TRAFAC class OBG-HflX-like GTPase superfamily. OBG GTPase family. Monomer. It depends on Mg(2+) as a cofactor.

It is found in the cytoplasm. Its function is as follows. An essential GTPase which binds GTP, GDP and possibly (p)ppGpp with moderate affinity, with high nucleotide exchange rates and a fairly low GTP hydrolysis rate. Plays a role in control of the cell cycle, stress response, ribosome biogenesis and in those bacteria that undergo differentiation, in morphogenesis control. This chain is GTPase Obg, found in Klebsiella pneumoniae subsp. pneumoniae (strain ATCC 700721 / MGH 78578).